Consider the following 404-residue polypeptide: Serine/threonine transporter SstT (404 aa).

Transmembrane regions (helical) follow at residues 12–32 (GGNL…LALV), 53–73 (AIAP…KEVG), 81–101 (ILVM…VLSF), 140–160 (ALAN…GIAL), 177–197 (AVSF…FGLV), 216–236 (LGVL…LIVF), 287–307 (VAIP…VTVL), 329–349 (IVAS…LLLI), and 356–376 (FNIP…IGVI).

This sequence belongs to the dicarboxylate/amino acid:cation symporter (DAACS) (TC 2.A.23) family.

The protein localises to the cell inner membrane. The catalysed reaction is L-serine(in) + Na(+)(in) = L-serine(out) + Na(+)(out). It catalyses the reaction L-threonine(in) + Na(+)(in) = L-threonine(out) + Na(+)(out). Its function is as follows. Involved in the import of serine and threonine into the cell, with the concomitant import of sodium (symport system). The sequence is that of Serine/threonine transporter SstT from Actinobacillus pleuropneumoniae serotype 7 (strain AP76).